Consider the following 286-residue polypeptide: Glycine--tRNA ligase alpha subunit (286 aa).

The protein belongs to the class-II aminoacyl-tRNA synthetase family. Tetramer of two alpha and two beta subunits.

It localises to the cytoplasm. It carries out the reaction tRNA(Gly) + glycine + ATP = glycyl-tRNA(Gly) + AMP + diphosphate. The polypeptide is Glycine--tRNA ligase alpha subunit (glyQ) (Thermotoga maritima (strain ATCC 43589 / DSM 3109 / JCM 10099 / NBRC 100826 / MSB8)).